Here is a 201-residue protein sequence, read N- to C-terminus: Small ribosomal subunit protein uS4 (201 aa).

The 61-residue stretch at 91 to 151 folds into the S4 RNA-binding domain; sequence ARLDNVIYRA…DRSRSMLWFD (61 aa).

The protein belongs to the universal ribosomal protein uS4 family. In terms of assembly, part of the 30S ribosomal subunit. Contacts protein S5. The interaction surface between S4 and S5 is involved in control of translational fidelity.

Its function is as follows. One of the primary rRNA binding proteins, it binds directly to 16S rRNA where it nucleates assembly of the body of the 30S subunit. In terms of biological role, with S5 and S12 plays an important role in translational accuracy. The chain is Small ribosomal subunit protein uS4 from Corynebacterium urealyticum (strain ATCC 43042 / DSM 7109).